A 198-amino-acid chain; its full sequence is Proteasome subunit beta type-2 (198 aa).

This sequence belongs to the peptidase T1B family. The 26S proteasome consists of a 20S proteasome core and two 19S regulatory subunits. The 20S proteasome core is composed of 28 subunits that are arranged in four stacked rings, resulting in a barrel-shaped structure. The two end rings are each formed by seven alpha subunits, and the two central rings are each formed by seven beta subunits. The catalytic chamber with the active sites is on the inside of the barrel.

The protein localises to the cytoplasm. It is found in the nucleus. Its function is as follows. Non-catalytic component of the proteasome, a multicatalytic proteinase complex which is characterized by its ability to cleave peptides with Arg, Phe, Tyr, Leu, and Glu adjacent to the leaving group at neutral or slightly basic pH. The proteasome has an ATP-dependent proteolytic activity. In Dictyostelium discoideum (Social amoeba), this protein is Proteasome subunit beta type-2 (psmB2).